A 100-amino-acid chain; its full sequence is Integration host factor subunit alpha (100 aa).

Belongs to the bacterial histone-like protein family. Heterodimer of an alpha and a beta chain.

This protein is one of the two subunits of integration host factor, a specific DNA-binding protein that functions in genetic recombination as well as in transcriptional and translational control. This chain is Integration host factor subunit alpha (ihfA), found in Zymomonas mobilis subsp. mobilis (strain ATCC 31821 / ZM4 / CP4).